An 806-amino-acid chain; its full sequence is Leucine--tRNA ligase (806 aa).

Positions 40–51 (PYPSGTGLHVGH) match the 'HIGH' region motif. The 'KMSKS' region signature appears at 576–580 (KMSKS). K579 serves as a coordination point for ATP.

The protein belongs to the class-I aminoacyl-tRNA synthetase family.

It localises to the cytoplasm. It carries out the reaction tRNA(Leu) + L-leucine + ATP = L-leucyl-tRNA(Leu) + AMP + diphosphate. The sequence is that of Leucine--tRNA ligase from Prosthecochloris aestuarii (strain DSM 271 / SK 413).